Consider the following 193-residue polypeptide: BH3-interacting domain death agonist (193 aa).

The short motif at 87-101 (IAAQLAEIGDQLDKQ) is the BH3 element.

As to quaternary structure, forms heterodimers either with the pro-apoptotic protein BAX or the anti-apoptotic protein Bcl-2.

It localises to the cytoplasm. The protein localises to the mitochondrion outer membrane. Induces caspases and apoptosis. Counters the protective effect of Bcl-2. The sequence is that of BH3-interacting domain death agonist (BID) from Gallus gallus (Chicken).